The following is a 429-amino-acid chain: S-adenosylmethionine synthase (429 aa).

His-14 serves as a coordination point for ATP. Asp-16 is a Mg(2+) binding site. Glu-42 is a binding site for K(+). Residues Glu-55 and Gln-98 each coordinate L-methionine. The tract at residues 98-108 (QSADINRGVDR) is flexible loop. Residues 165 to 167 (DAK), 252 to 253 (KF), Asp-261, 267 to 268 (RK), Ala-284, and Lys-288 contribute to the ATP site. Asp-261 provides a ligand contact to L-methionine. Residue Lys-292 coordinates L-methionine.

The protein belongs to the AdoMet synthase family. In terms of assembly, homotetramer; dimer of dimers. Requires Mg(2+) as cofactor. The cofactor is K(+).

The protein localises to the cytoplasm. It catalyses the reaction L-methionine + ATP + H2O = S-adenosyl-L-methionine + phosphate + diphosphate. It functions in the pathway amino-acid biosynthesis; S-adenosyl-L-methionine biosynthesis; S-adenosyl-L-methionine from L-methionine: step 1/1. In terms of biological role, catalyzes the formation of S-adenosylmethionine (AdoMet) from methionine and ATP. The overall synthetic reaction is composed of two sequential steps, AdoMet formation and the subsequent tripolyphosphate hydrolysis which occurs prior to release of AdoMet from the enzyme. The sequence is that of S-adenosylmethionine synthase from Porphyromonas gingivalis (strain ATCC 33277 / DSM 20709 / CIP 103683 / JCM 12257 / NCTC 11834 / 2561).